We begin with the raw amino-acid sequence, 121 residues long: Cell division protein FtsB (121 aa).

The Cytoplasmic portion of the chain corresponds to 1–6; the sequence is MRNWRW. Residues 7 to 24 traverse the membrane as a helical segment; it reads LLLVLAVLLAWLQYRFWF. The Periplasmic portion of the chain corresponds to 25-121; the sequence is GPGNSGEVMM…PEPIDPVDHP (97 aa). Residues 31–66 are a coiled coil; it reads EVMMLEAQVAHQTQDNEGLRQRNQALAAEVKDLKDG. The disordered stretch occupies residues 92–121; that stretch reads EDAPLPAPASPEAPAPPQQAPEPIDPVDHP. The span at 96–115 shows a compositional bias: pro residues; sequence LPAPASPEAPAPPQQAPEPI.

The protein belongs to the FtsB family. In terms of assembly, part of a complex composed of FtsB, FtsL and FtsQ.

The protein resides in the cell inner membrane. Essential cell division protein. May link together the upstream cell division proteins, which are predominantly cytoplasmic, with the downstream cell division proteins, which are predominantly periplasmic. In Xanthomonas euvesicatoria pv. vesicatoria (strain 85-10) (Xanthomonas campestris pv. vesicatoria), this protein is Cell division protein FtsB.